The following is a 101-amino-acid chain: ATP synthase subunit f, mitochondrial (101 aa).

A mitochondrion-targeting transit peptide spans Met1–Ala6.

The protein belongs to the ATPase F chain family. As to quaternary structure, F-type ATPases have 2 components, CF(1) - the catalytic core - and CF(0) - the membrane proton channel. In yeast, the dimeric form of ATP synthase consists of 17 polypeptides: alpha, beta, gamma, delta, epsilon, 4 (B), 5 (OSCP), 6 (A), 8, 9 (C), d, E (Tim11), f, g, h, i/j and k.

Its subcellular location is the mitochondrion. It is found in the mitochondrion inner membrane. In terms of biological role, mitochondrial membrane ATP synthase (F(1)F(0) ATP synthase or Complex V) produces ATP from ADP in the presence of a proton gradient across the membrane which is generated by electron transport complexes of the respiratory chain. F-type ATPases consist of two structural domains, F(1) - containing the extramembraneous catalytic core and F(0) - containing the membrane proton channel, linked together by a central stalk and a peripheral stalk. During catalysis, ATP synthesis in the catalytic domain of F(1) is coupled via a rotary mechanism of the central stalk subunits to proton translocation. Part of the complex F(0) domain. Minor subunit located with subunit a in the membrane. The chain is ATP synthase subunit f, mitochondrial (ATP17) from Saccharomyces cerevisiae (strain ATCC 204508 / S288c) (Baker's yeast).